Consider the following 108-residue polypeptide: Large ribosomal subunit protein uL24 (108 aa).

Belongs to the universal ribosomal protein uL24 family. In terms of assembly, part of the 50S ribosomal subunit.

One of two assembly initiator proteins, it binds directly to the 5'-end of the 23S rRNA, where it nucleates assembly of the 50S subunit. In terms of biological role, one of the proteins that surrounds the polypeptide exit tunnel on the outside of the subunit. The polypeptide is Large ribosomal subunit protein uL24 (Mycoplasma mycoides subsp. mycoides SC (strain CCUG 32753 / NCTC 10114 / PG1)).